The chain runs to 748 residues: MASSRCPAPRGCRCLPGASLAWLGTVLLLLADWVLLRTALPRIFSLLVPTALPLLRVWAVGLSRWAVLWLGACGVLRATVGSKSENAGAQGWLAALKPLAAALGLALPGLALFRELISWGAPGSADSTRLLHWGSHPTAFVVSYAAALPAAALWHKLGSLWVPGGQGGSGNPVRRLLGCLGSETRRLSLFLVLVVLSSLGEMAIPFFTGRLTDWILQDGSADTFTRNLTLMSILTIASAVLEFVGDGIYNNTMGHVHSHLQGEVFGAVLRQETEFFQQNQTGNIMSRVTEDTSTLSDSLSENLSLFLWYLVRGLCLLGIMLWGSVSLTMVTLITLPLLFLLPKKVGKWYQLLEVQVRESLAKSSQVAIEALSAMPTVRSFANEEGEAQKFREKLQEIKTLNQKEAVAYAVNSWTTSISGMLLKVGILYIGGQLVTSGAVSSGNLVTFVLYQMQFTQAVEVLLSIYPRVQKAVGSSEKIFEYLDRTPRCPPSGLLTPLHLEGLVQFQDVSFAYPNRPDVLVLQGLTFTLRPGEVTALVGPNGSGKSTVAALLQNLYQPTGGQLLLDGKPLPQYEHRYLHRQVAAVGQEPQVFGRSLQENIAYGLTQKPTMEEITAAAVKSGAHSFISGLPQGYDTEVDEAGSQLSGGQRQAVALARALIRKPCVLILDDATSALDANSQLQVEQLLYESPERYSRSVLLITQHLSLVEQADHILFLEGGAIREGGTHQQLMEKKGCYWAMVQAPADAPE.

Residues 1 to 15 (MASSRCPAPRGCRCL) are Cytoplasmic-facing. The chain crosses the membrane as a helical span at residues 16–36 (PGASLAWLGTVLLLLADWVLL). Topologically, residues 37–53 (RTALPRIFSLLVPTALP) are lumenal. A helical membrane pass occupies residues 54–76 (LLRVWAVGLSRWAVLWLGACGVL). Residues 77 to 92 (RATVGSKSENAGAQGW) lie on the Cytoplasmic side of the membrane. Residues 93 to 113 (LAALKPLAAALGLALPGLALF) form a helical membrane-spanning segment. Topologically, residues 114 to 133 (RELISWGAPGSADSTRLLHW) are lumenal. Residues 134-154 (GSHPTAFVVSYAAALPAAALW) traverse the membrane as a helical segment. Residues 155 to 186 (HKLGSLWVPGGQGGSGNPVRRLLGCLGSETRR) are Cytoplasmic-facing. Residues 187–207 (LSLFLVLVVLSSLGEMAIPFF) traverse the membrane as a helical segment. In terms of domain architecture, ABC transmembrane type-1 spans 187–470 (LSLFLVLVVL…LLSIYPRVQK (284 aa)). The Lumenal portion of the chain corresponds to 208–227 (TGRLTDWILQDGSADTFTRN). A helical membrane pass occupies residues 228–248 (LTLMSILTIASAVLEFVGDGI). Residues 249-298 (YNNTMGHVHSHLQGEVFGAVLRQETEFFQQNQTGNIMSRVTEDTSTLSDS) lie on the Cytoplasmic side of the membrane. The chain crosses the membrane as a helical span at residues 299-319 (LSENLSLFLWYLVRGLCLLGI). The Lumenal segment spans residues 320 to 328 (MLWGSVSLT). A helical membrane pass occupies residues 329-349 (MVTLITLPLLFLLPKKVGKWY). The Cytoplasmic portion of the chain corresponds to 350–418 (QLLEVQVRES…AVNSWTTSIS (69 aa)). Positions 375–420 (PTVRSFANEEGEAQKFREKLQEIKTLNQKEAVAYAVNSWTTSISGM) are part of the peptide-binding site. The chain crosses the membrane as a helical span at residues 419 to 439 (GMLLKVGILYIGGQLVTSGAV). Topologically, residues 440 to 443 (SSGN) are lumenal. The chain crosses the membrane as a helical span at residues 444-464 (LVTFVLYQMQFTQAVEVLLSI). The tract at residues 453-487 (QFTQAVEVLLSIYPRVQKAVGSSEKIFEYLDRTPR) is part of the peptide-binding site. Residues 465 to 748 (YPRVQKAVGS…MVQAPADAPE (284 aa)) lie on the Cytoplasmic side of the membrane. Residues 503–742 (VQFQDVSFAY…KGCYWAMVQA (240 aa)) enclose the ABC transporter domain. Residues 538-546 (GPNGSGKST), 641-647 (SQLSGGQ), and Gln-701 each bind ATP. Mg(2+) is bound at residue Ser-545.

It belongs to the ABC transporter superfamily. ABCB family. MHC peptide exporter (TC 3.A.1.209) subfamily. In terms of assembly, heterodimer of TAP1 and TAP2 (TAP1-TAP2). A component of the peptide loading complex (PLC), interacts via TAPBP with MHCI heterodimer; this interaction mediates peptide-MHCI assembly. Recruits TAPBP in a 1:1 stoichiometry. Interacts with classical MHCI such as HLA-A*02-B2M; this interaction is obligatory for the loading of peptide epitopes. Interacts with non-classical MHCI molecules including HLA-E-B2M and HLA-F-B2M as well as PLC component CALR before the peptide loading. Interacts with PSMB5 and PSMB8. (Microbial infection) Interacts with Epstein-Barr virus BNLF2a. As to quaternary structure, (Microbial infection) Interacts with herpes simplex virus US12/ICP47. In terms of assembly, (Microbial infection) Interacts with adenovirus E3-19K glycoprotein, which binds TAP1-TAP2 and acts as a TAPBP inhibitor, preventing TAP1-TAP2 association with MHCI. Mg(2+) is required as a cofactor. Highly expressed in professional APCs monocytes and dendritic cells as well as in lymphocyte subsets T cells, B cells and NK cells.

It localises to the endoplasmic reticulum membrane. The catalysed reaction is a peptide antigen(in) + ATP + H2O = a peptide antigen(out) + ADP + phosphate + H(+). With respect to regulation, inhibited at high ER lumenal peptide concentrations. (Microbial infection) Inhibited by herpes simplex virus US12/ICP47 protein, which blocks the peptide-binding site of TAP1-TAP2. Its activity is regulated as follows. (Microbial infection) Inhibited by human cytomegalovirus US6 glycoprotein, which binds to the lumenal side of TAP1-TAP2 complex and inhibits peptide translocation by specifically blocking ATP-binding and preventing TAP1-TAP2 conformational rearrangement induced by peptide binding. Its function is as follows. ABC transporter associated with antigen processing. In complex with TAP2 mediates unidirectional translocation of peptide antigens from cytosol to endoplasmic reticulum (ER) for loading onto MHC class I (MHCI) molecules. Uses the chemical energy of ATP to export peptides against the concentration gradient. During the transport cycle alternates between 'inward-facing' state with peptide binding site facing the cytosol to 'outward-facing' state with peptide binding site facing the ER lumen. Peptide antigen binding to ATP-loaded TAP1-TAP2 induces a switch to hydrolysis-competent 'outward-facing' conformation ready for peptide loading onto nascent MHCI molecules. Subsequently ATP hydrolysis resets the transporter to the 'inward facing' state for a new cycle. Typically transports intracellular peptide antigens of 8 to 13 amino acids that arise from cytosolic proteolysis via IFNG-induced immunoproteasome. Binds peptides with free N- and C-termini, the first three and the C-terminal residues being critical. Preferentially selects peptides having a highly hydrophobic residue at position 3 and hydrophobic or charged residues at the C-terminal anchor. Proline at position 2 has the most destabilizing effect. As a component of the peptide loading complex (PLC), acts as a molecular scaffold essential for peptide-MHCI assembly and antigen presentation. The sequence is that of Antigen peptide transporter 1 from Homo sapiens (Human).